A 186-amino-acid polypeptide reads, in one-letter code: MPTPNKAASVAELKDAFQSSNAAVLTEYRGLTVAQLKTLRRSLGENAQYAVVKNTLTKIAANQAGITALDEHFAGPTAVAFITGDPVESAKSLRDFAKDNPNLIIKAGVLDGKALTADEIKKLADLESREVLLSKLAGAFKGKQSQAASLFQALPSKFVRTAKRFASSSPSRAVPSNSARALIHAA.

Belongs to the universal ribosomal protein uL10 family. As to quaternary structure, part of the ribosomal stalk of the 50S ribosomal subunit. The N-terminus interacts with L11 and the large rRNA to form the base of the stalk. The C-terminus forms an elongated spine to which L12 dimers bind in a sequential fashion forming a multimeric L10(L12)X complex.

Functionally, forms part of the ribosomal stalk, playing a central role in the interaction of the ribosome with GTP-bound translation factors. The polypeptide is Large ribosomal subunit protein uL10 (rplJ) (Streptomyces virginiae (Streptomyces cinnamonensis)).